The following is a 341-amino-acid chain: UDP-3-O-(3-hydroxymyristoyl)glucosamine N-acyltransferase (341 aa).

His239 serves as the catalytic Proton acceptor.

It belongs to the transferase hexapeptide repeat family. LpxD subfamily. Homotrimer.

The enzyme catalyses a UDP-3-O-[(3R)-3-hydroxyacyl]-alpha-D-glucosamine + a (3R)-hydroxyacyl-[ACP] = a UDP-2-N,3-O-bis[(3R)-3-hydroxyacyl]-alpha-D-glucosamine + holo-[ACP] + H(+). It carries out the reaction UDP-3-O-[(3R)-3-hydroxytetradecanoyl]-alpha-D-glucosamine + (3R)-hydroxytetradecanoyl-[ACP] = UDP-2-N,3-O-bis[(3R)-3-hydroxytetradecanoyl]-alpha-D-glucosamine + holo-[ACP] + H(+). It functions in the pathway glycolipid biosynthesis; lipid IV(A) biosynthesis; lipid IV(A) from (3R)-3-hydroxytetradecanoyl-[acyl-carrier-protein] and UDP-N-acetyl-alpha-D-glucosamine: step 3/6. Functionally, catalyzes the N-acylation of UDP-3-O-(hydroxytetradecanoyl)glucosamine using 3-hydroxytetradecanoyl-ACP as the acyl donor. Is involved in the biosynthesis of lipid A, a phosphorylated glycolipid that anchors the lipopolysaccharide to the outer membrane of the cell. This Salmonella paratyphi A (strain ATCC 9150 / SARB42) protein is UDP-3-O-(3-hydroxymyristoyl)glucosamine N-acyltransferase.